A 586-amino-acid polypeptide reads, in one-letter code: Terminase, large subunit (586 aa).

The interval 1–229 is ATPase activity; that stretch reads MSTQSNRNAL…TIIWPALYPR (229 aa). The Walker A motif motif lies at 58-65; sequence AFRGIGKS. Positions 156–161 match the Walker B motif motif; the sequence is IIIADD. Positions 344-429 are nuclease activity; sequence HSYHSCSQNT…ESNFGDGMFG (86 aa). Residues aspartate 364, glutamate 420, and aspartate 518 each contribute to the Mg(2+) site. The tract at residues 571 to 586 is involved in prohead binding; sequence LYWEDDDVNGDRFINW.

The protein belongs to the Teseptimavirus large terminase family. In terms of assembly, homopentamer. Interacts with the terminase small subunit; the active complex is probably heterooligomeric. Interacts with the portal protein. Mg(2+) serves as cofactor.

The terminase large subunit acts as an ATP driven molecular motor necessary for viral DNA translocation into empty capsids and as an endonuclease that cuts the viral genome at a unique and precise dsDNA sequence to initiate and to end a packaging reaction. The terminase lies at a unique vertex of the procapsid and is composed of two subunits, a small terminase subunit involved in viral DNA recognition (packaging sequence), and a large terminase subunit possessing endonucleolytic and ATPase activities. Both terminase subunits heterooligomerize and are docked on the portal protein to form the packaging machine. The terminase large subunit exhibits endonuclease activity and cleaves the viral genome concatemer. Once the DNA is packaged, the terminase detaches from the connector and gets replaced by the tail to finish maturation of the virion. This is Terminase, large subunit (19) from Escherichia coli (Bacteriophage T3).